A 1233-amino-acid chain; its full sequence is ATP-dependent helicase/nuclease subunit A (1233 aa).

Positions Thr3 to Arg474 constitute a UvrD-like helicase ATP-binding domain. An ATP-binding site is contributed by Ala24 to Thr31. A UvrD-like helicase C-terminal domain is found at Val518–Gly809. Residues Val533 to Glu555 form a disordered region.

Belongs to the helicase family. AddA subfamily. As to quaternary structure, heterodimer of AddA and AddB/RexB. Mg(2+) serves as cofactor.

It carries out the reaction Couples ATP hydrolysis with the unwinding of duplex DNA by translocating in the 3'-5' direction.. The catalysed reaction is ATP + H2O = ADP + phosphate + H(+). Functionally, the heterodimer acts as both an ATP-dependent DNA helicase and an ATP-dependent, dual-direction single-stranded exonuclease. Recognizes the chi site generating a DNA molecule suitable for the initiation of homologous recombination. The AddA nuclease domain is required for chi fragment generation; this subunit has the helicase and 3' -&gt; 5' nuclease activities. In Thermoanaerobacter pseudethanolicus (strain ATCC 33223 / 39E) (Clostridium thermohydrosulfuricum), this protein is ATP-dependent helicase/nuclease subunit A.